A 160-amino-acid polypeptide reads, in one-letter code: Cytochrome b6-f complex subunit 4 (160 aa).

The next 3 membrane-spanning stretches (helical) occupy residues 36–56 (LLYT…GLAL), 95–115 (LLGV…PFIE), and 127–147 (PIAT…GIGA).

This sequence belongs to the cytochrome b family. PetD subfamily. As to quaternary structure, the 4 large subunits of the cytochrome b6-f complex are cytochrome b6, subunit IV (17 kDa polypeptide, petD), cytochrome f and the Rieske protein, while the 4 small subunits are petG, petL, petM and petN. The complex functions as a dimer.

Its subcellular location is the plastid. The protein resides in the chloroplast thylakoid membrane. Functionally, component of the cytochrome b6-f complex, which mediates electron transfer between photosystem II (PSII) and photosystem I (PSI), cyclic electron flow around PSI, and state transitions. The polypeptide is Cytochrome b6-f complex subunit 4 (Cyanidioschyzon merolae (strain NIES-3377 / 10D) (Unicellular red alga)).